The chain runs to 287 residues: Co-chaperone protein DjlA (287 aa).

At Met1–Lys6 the chain is on the periplasmic side. Residues Ile7–His30 form a helical membrane-spanning segment. The Cytoplasmic portion of the chain corresponds to Gln31–Lys287. Residues Gly192–Ala213 form a disordered region. The region spanning Asp221–Lys287 is the J domain.

Homodimer.

It is found in the cell inner membrane. Functionally, regulatory DnaK co-chaperone. Direct interaction between DnaK and DjlA is needed for the induction of the wcaABCDE operon, involved in the synthesis of a colanic acid polysaccharide capsule, possibly through activation of the RcsB/RcsC phosphotransfer signaling pathway. The colanic acid capsule may help the bacterium survive conditions outside the host. This chain is Co-chaperone protein DjlA, found in Vibrio vulnificus (strain YJ016).